Consider the following 545-residue polypeptide: Alpha-galactosidase A (545 aa).

The N-terminal stretch at 1–31 (MIQGLESIMNQGTKRILLAATLAATPWQVYG) is a signal peptide. Residues Cys-54 and Cys-86 are joined by a disulfide bond. Residues Asn-57, Asn-95, Asn-101, and Asn-131 are each glycosylated (N-linked (GlcNAc...) asparagine). Cys-134 and Cys-164 form a disulfide bridge. Asp-162 acts as the Nucleophile in catalysis. Residue Asn-211 is glycosylated (N-linked (GlcNAc...) asparagine). Asp-220 functions as the Proton donor in the catalytic mechanism. 2 N-linked (GlcNAc...) asparagine glycosylation sites follow: Asn-363 and Asn-444. The Ricin B-type lectin domain maps to 421–518 (CSSVVPTGLV…KNAKTDGCLT (98 aa)). 2 disulfides stabilise this stretch: Cys-438–Cys-452 and Cys-477–Cys-490.

Belongs to the glycosyl hydrolase 27 family. A C-terminal Ser/Thr-rich region may provide possible sites for O-glycosylation.

It is found in the secreted. It catalyses the reaction Hydrolysis of terminal, non-reducing alpha-D-galactose residues in alpha-D-galactosides, including galactose oligosaccharides, galactomannans and galactolipids.. Its function is as follows. Hydrolyzes a variety of simple alpha-D-galactoside as well as more complex molecules such as oligosaccharides and polysaccharides. This is Alpha-galactosidase A (aglA) from Aspergillus niger.